Here is a 350-residue protein sequence, read N- to C-terminus: Tsukushi (350 aa).

Residues 1-17 (MAPSWLFLLFIPGMVGS) form the signal peptide. An LRRNT domain is found at 18 to 59 (SRSCFPGCQCIVDNFGLFHSFSLTKVDCSGVGPHVVPVSIPL). 10 LRR repeats span residues 60-81 (DTSY…VLSG), 86-107 (TLIN…TFSK), 110-131 (YLES…SFLY), 133-154 (RLTE…AFTL), 159-180 (RSMT…AERP), 183-203 (NIHS…LHGI), 204-225 (PLRH…SFLG), 228-250 (GLTH…SFKT), 253-275 (SLLD…MFFG), and 278-299 (SLQE…IMLN). 2 N-linked (GlcNAc...) asparagine glycosylation sites follow: asparagine 75 and asparagine 91.

As to quaternary structure, interacts with bmp4. Interacts with dll1 (via extracellular region). Interacts with fgf8; inhibits fgf8 signaling. Interacts with nodal2/Xnr2; enhances nodal2 activity.

The protein resides in the secreted. Functionally, contributes to various developmental events through its interactions with multiple signaling pathways. Dorsalizing factor which functions as an inhibitor of bone morphogenetic proteins (BMP) during gastrulation. Promotes dll1-dependent activation of Notch signaling and is required for neural crest formation. Induces endoderm and dorsal mesoderm formation by enhancing nodal2/Xnr2 activity while inhibiting ventrolateral mesoderm formation through inhibition of fgf8. This chain is Tsukushi (tsku), found in Xenopus tropicalis (Western clawed frog).